Reading from the N-terminus, the 297-residue chain is 2,3,4,5-tetrahydropyridine-2,6-dicarboxylate N-succinyltransferase (297 aa).

Mg(2+) contacts are provided by D148 and E165. Residue E181 is the Acyl-anhydride intermediate of the active site. Succinyl-CoA contacts are provided by residues R183, G198, S201, A224, 239 to 240, G247, K258, and 271 to 274; these read EA and RRDS.

The protein belongs to the type 2 tetrahydrodipicolinate N-succinyltransferase family. Homotrimer.

It is found in the cytoplasm. It carries out the reaction (S)-2,3,4,5-tetrahydrodipicolinate + succinyl-CoA + H2O = (S)-2-succinylamino-6-oxoheptanedioate + CoA. It participates in amino-acid biosynthesis; L-lysine biosynthesis via DAP pathway; LL-2,6-diaminopimelate from (S)-tetrahydrodipicolinate (succinylase route): step 1/3. Its function is as follows. Catalyzes the conversion of the cyclic tetrahydrodipicolinate (THDP) into the acyclic N-succinyl-L-2-amino-6-oxopimelate using succinyl-CoA. This is 2,3,4,5-tetrahydropyridine-2,6-dicarboxylate N-succinyltransferase from Corynebacterium glutamicum (strain ATCC 13032 / DSM 20300 / JCM 1318 / BCRC 11384 / CCUG 27702 / LMG 3730 / NBRC 12168 / NCIMB 10025 / NRRL B-2784 / 534).